Here is a 391-residue protein sequence, read N- to C-terminus: Phosphoglycerate kinase (391 aa).

Residues 21–23 (DLN), R36, 59–62 (HLGR), R113, and R146 each bind substrate. ATP is bound by residues K197, E319, and 345–348 (GGDT).

This sequence belongs to the phosphoglycerate kinase family. In terms of assembly, monomer.

It is found in the cytoplasm. The enzyme catalyses (2R)-3-phosphoglycerate + ATP = (2R)-3-phospho-glyceroyl phosphate + ADP. It participates in carbohydrate degradation; glycolysis; pyruvate from D-glyceraldehyde 3-phosphate: step 2/5. The protein is Phosphoglycerate kinase of Shewanella woodyi (strain ATCC 51908 / MS32).